The following is a 515-amino-acid chain: Pre-glycoprotein polyprotein GP complex (515 aa).

Gly-2 is lipidated: N-myristoyl glycine; by host. Residues 2–17 (GQVIGFFQSLPEIINE) are Extracellular-facing. Residues 18 to 33 (ALNIALICVALLATIK) form a helical membrane-spanning segment. Over 34–58 (GMVNIWKSGLIQLLFFLTLAGRSCS) the chain is Cytoplasmic. Cys-57 contacts Zn(2+). At 59-453 (HSFTIGRFHE…QGRTPLSLVD (395 aa)) the chain is on the extracellular side. Cystine bridges form between Cys-87/Cys-255, Cys-300/Cys-313, Cys-322/Cys-331, and Cys-385/Cys-406. Residues Asn-90, Asn-112, Asn-127, Asn-180, and Asn-248 are each glycosylated (N-linked (GlcNAc...) asparagine; by host). N-linked (GlcNAc...) asparagine; by host glycosylation is found at Asn-386, Asn-394, and Asn-416. The chain crosses the membrane as a helical span at residues 454 to 474 (LCFWSTLFYISTLFAHLVGFP). Over 475 to 515 (THRHLIGEGCPKPHRLTGSGICSCGHYGIPGKPVRWTKMSR) the chain is Cytoplasmic. Zn(2+) contacts are provided by His-476, His-478, Cys-484, His-488, Cys-496, and Cys-498.

The protein belongs to the arenaviridae GPC protein family. Interacts with glycoprotein G2. Part of the GP complex (GP-C) together with glycoprotein G1 and glycoprotein G2. The GP-complex interacts with protein Z, which interacts with ribonucleocapsid; these interactions may induce virion budding. In terms of assembly, homotrimer; disulfide-linked. In pre-fusion state, G1 homotrimers bind G2 homotrimers via ionic interactions. Part of the GP complex (GP-C) together with glycoprotein G2 and the stable signal peptide. The GP-complex interacts with protein Z, which interacts with ribonucleocapsid; these interactions may induce virion budding. As to quaternary structure, homotrimer. Interacts with the stable signal peptide. In pre-fusion state, G2 homotrimers bind G1 homotrimers via ionic interactions. Part of the GP complex (GP-C) together with glycoprotein G1 and the stable signal peptide. Acidification in the endosome triggers rearrangements, which ultimately leads to a 6 helix bundle formed by the two heptad repeat domains (HR1 and HR2) in post-fusion state. The GP-complex interacts with protein Z, which interacts with ribonucleocapsid; these interactions may induce virion budding. Post-translationally, specific enzymatic cleavages in vivo yield mature proteins. GP-C polyprotein is cleaved in the endoplasmic reticulum by the host protease MBTPS1. Only cleaved glycoprotein is incorporated into virions. The SSP remains stably associated with the GP complex following cleavage by signal peptidase and plays crucial roles in the trafficking of GP through the secretory pathway. In terms of processing, myristoylation is necessary for GP2-mediated fusion activity.

The protein resides in the virion membrane. It is found in the host endoplasmic reticulum membrane. Its subcellular location is the host Golgi apparatus membrane. It localises to the host cell membrane. In terms of biological role, functions as a cleaved signal peptide that is retained as the third component of the GP complex (GP-C). Helps to stabilize the spike complex in its native conformation. The SSP is required for efficient glycoprotein expression, post-translational maturation cleavage of G1 and G2, glycoprotein transport to the cell surface plasma membrane, formation of infectious virus particles, and acid pH-dependent glycoprotein-mediated cell fusion. Forms the virion spikes together with glycoprotein G2. The glycoprotein spike trimers are connected to the underlying matrix. Mediates virus attachment to host receptor alpha-dystroglycan DAG1. This attachment induces virion internalization predominantly through clathrin- and caveolin-independent endocytosis. Functionally, forms the virion spikes together with glycoprotein G1. The glycoprotein spike trimers are connected to the underlying matrix. Class I viral fusion protein that directs fusion of viral and host endosomal membranes, leading to delivery of the nucleocapsid into the cytoplasm. Membrane fusion is mediated by irreversible conformational changes induced by acidification. The sequence is that of Pre-glycoprotein polyprotein GP complex from Latino mammarenavirus (isolate Rat/Bolivia/MARU 1924/1965) (LATV).